Here is a 223-residue protein sequence, read N- to C-terminus: Small ribosomal subunit protein uS3 (223 aa).

One can recognise a KH type-2 domain in the interval 39 to 108 (IRNFVKKNSY…NILINIVEVK (70 aa)).

It belongs to the universal ribosomal protein uS3 family. Part of the 30S ribosomal subunit. Forms a tight complex with proteins S10 and S14.

Its function is as follows. Binds the lower part of the 30S subunit head. Binds mRNA in the 70S ribosome, positioning it for translation. The sequence is that of Small ribosomal subunit protein uS3 from Clostridium botulinum (strain 657 / Type Ba4).